The primary structure comprises 410 residues: Argininosuccinate synthase (410 aa).

Residue Ala9–Ser17 participates in ATP binding. Tyr86 is an L-citrulline binding site. Gly116 provides a ligand contact to ATP. L-aspartate is bound by residues Thr118, Asn122, and Asp123. L-citrulline is bound at residue Asn122. L-citrulline-binding residues include Arg126, Ser174, Glu259, and Tyr271.

This sequence belongs to the argininosuccinate synthase family. Type 1 subfamily. Homotetramer.

The protein localises to the cytoplasm. It catalyses the reaction L-citrulline + L-aspartate + ATP = 2-(N(omega)-L-arginino)succinate + AMP + diphosphate + H(+). It participates in amino-acid biosynthesis; L-arginine biosynthesis; L-arginine from L-ornithine and carbamoyl phosphate: step 2/3. The sequence is that of Argininosuccinate synthase from Limosilactobacillus reuteri (strain DSM 20016) (Lactobacillus reuteri).